Here is a 257-residue protein sequence, read N- to C-terminus: Flavin-dependent thymidylate synthase (257 aa).

Residues 1–202 (MNVKLVSYTR…PRLFRYVGPN (202 aa)) form the ThyX domain. Residues S55, 79–81 (RHR), and Q87 contribute to the FAD site. Residues 76–79 (QLVR), 87–91 (QMSHR), and R141 each bind dUMP. The ThyX motif motif lies at 79 to 89 (RHRVASYTQMS). Residues 157–159 (NAR) and N163 contribute to the FAD site. R168 lines the dUMP pocket. The active-site Involved in ionization of N3 of dUMP, leading to its activation is R168.

Belongs to the thymidylate synthase ThyX family. As to quaternary structure, homotetramer. Requires FAD as cofactor.

It carries out the reaction dUMP + (6R)-5,10-methylene-5,6,7,8-tetrahydrofolate + NADPH + H(+) = dTMP + (6S)-5,6,7,8-tetrahydrofolate + NADP(+). Its pathway is pyrimidine metabolism; dTTP biosynthesis. In terms of biological role, catalyzes the reductive methylation of 2'-deoxyuridine-5'-monophosphate (dUMP) to 2'-deoxythymidine-5'-monophosphate (dTMP) while utilizing 5,10-methylenetetrahydrofolate (mTHF) as the methyl donor, and NADPH and FADH(2) as the reductant. This is Flavin-dependent thymidylate synthase from Sulfurisphaera tokodaii (strain DSM 16993 / JCM 10545 / NBRC 100140 / 7) (Sulfolobus tokodaii).